Consider the following 552-residue polypeptide: Elongator complex protein 3 (552 aa).

A Radical SAM core domain is found at 84–374 (RTASGIAVVA…YRVQRDIPMP (291 aa)). 3 residues coordinate [4Fe-4S] cluster: Cys-101, Cys-111, and Cys-114. Acetyl-CoA-binding positions include Lys-166, 476-479 (ELHV), 499-501 (FGM), and Tyr-532. The N-acetyltransferase domain occupies 398 to 552 (TTCRDVRTRE…YMSKSIEENN (155 aa)).

The protein belongs to the ELP3 family. Component of the elongator complex composed of Elp1, Elp2, Elp3, Elp4, Elp5 and Elp6. The elongator complex associates with and stabilizes microtubules; efficient interaction requires the full complex. It depends on [4Fe-4S] cluster as a cofactor.

It localises to the cytoplasm. Its subcellular location is the nucleus. It is found in the cytoskeleton. The protein resides in the spindle. The catalysed reaction is uridine(34) in tRNA + acetyl-CoA + S-adenosyl-L-methionine + H2O = 5-(carboxymethyl)uridine(34) in tRNA + 5'-deoxyadenosine + L-methionine + CoA + 2 H(+). It functions in the pathway tRNA modification; 5-methoxycarbonylmethyl-2-thiouridine-tRNA biosynthesis. In terms of biological role, catalytic tRNA acetyltransferase subunit of the elongator complex, which is required for multiple tRNA modifications, including mcm5U (5-methoxycarbonylmethyl uridine), mcm5s2U (5-methoxycarbonylmethyl-2-thiouridine), and ncm5U (5-carbamoylmethyl uridine). In the elongator complex, acts as a tRNA uridine(34) acetyltransferase by mediating formation of carboxymethyluridine in the wobble base at position 34 in tRNAs. Binding by the elongator complex stabilizes microtubules and promotes their growth. This induces central spindle asymmetry, promoting polarized signaling endosome trafficking during asymmetric cell division and cell fate assignation of sensory organ precursor cells. Plays a role in the control of synaptic bouton expansion. Required for larval development. Involved in protein synthesis-dependent long-term memory formation, probably as part of the elongator complex. The sequence is that of Elongator complex protein 3 from Drosophila melanogaster (Fruit fly).